The sequence spans 84 residues: Large ribosomal subunit protein bL27 (84 aa).

The tract at residues 1–22 (MAHKKAGGSTRNGRDSESKRLG) is disordered.

It belongs to the bacterial ribosomal protein bL27 family.

The protein is Large ribosomal subunit protein bL27 of Shewanella pealeana (strain ATCC 700345 / ANG-SQ1).